A 345-amino-acid polypeptide reads, in one-letter code: Phosphoribosylformylglycinamidine cyclo-ligase (345 aa).

Belongs to the AIR synthase family.

It is found in the cytoplasm. It catalyses the reaction 2-formamido-N(1)-(5-O-phospho-beta-D-ribosyl)acetamidine + ATP = 5-amino-1-(5-phospho-beta-D-ribosyl)imidazole + ADP + phosphate + H(+). It functions in the pathway purine metabolism; IMP biosynthesis via de novo pathway; 5-amino-1-(5-phospho-D-ribosyl)imidazole from N(2)-formyl-N(1)-(5-phospho-D-ribosyl)glycinamide: step 2/2. This Shewanella denitrificans (strain OS217 / ATCC BAA-1090 / DSM 15013) protein is Phosphoribosylformylglycinamidine cyclo-ligase.